A 128-amino-acid polypeptide reads, in one-letter code: Ribonuclease P protein component (128 aa).

It belongs to the RnpA family. As to quaternary structure, consists of a catalytic RNA component (M1 or rnpB) and a protein subunit.

The enzyme catalyses Endonucleolytic cleavage of RNA, removing 5'-extranucleotides from tRNA precursor.. In terms of biological role, RNaseP catalyzes the removal of the 5'-leader sequence from pre-tRNA to produce the mature 5'-terminus. It can also cleave other RNA substrates such as 4.5S RNA. The protein component plays an auxiliary but essential role in vivo by binding to the 5'-leader sequence and broadening the substrate specificity of the ribozyme. The polypeptide is Ribonuclease P protein component (Prochlorococcus marinus (strain MIT 9303)).